Consider the following 474-residue polypeptide: Proline--tRNA ligase (474 aa).

This sequence belongs to the class-II aminoacyl-tRNA synthetase family. ProS type 3 subfamily. As to quaternary structure, homodimer.

It is found in the cytoplasm. It carries out the reaction tRNA(Pro) + L-proline + ATP = L-prolyl-tRNA(Pro) + AMP + diphosphate. Its function is as follows. Catalyzes the attachment of proline to tRNA(Pro) in a two-step reaction: proline is first activated by ATP to form Pro-AMP and then transferred to the acceptor end of tRNA(Pro). This is Proline--tRNA ligase from Onion yellows phytoplasma (strain OY-M).